The primary structure comprises 302 residues: Aspartate carbamoyltransferase catalytic subunit (302 aa).

Residues R53 and T54 each coordinate carbamoyl phosphate. Residue K82 coordinates L-aspartate. Carbamoyl phosphate contacts are provided by R103, H131, and Q134. L-aspartate is bound by residues R164 and R223. The carbamoyl phosphate site is built by L260 and P261.

The protein belongs to the aspartate/ornithine carbamoyltransferase superfamily. ATCase family. As to quaternary structure, heterooligomer of catalytic and regulatory chains.

The catalysed reaction is carbamoyl phosphate + L-aspartate = N-carbamoyl-L-aspartate + phosphate + H(+). It participates in pyrimidine metabolism; UMP biosynthesis via de novo pathway; (S)-dihydroorotate from bicarbonate: step 2/3. Its function is as follows. Catalyzes the condensation of carbamoyl phosphate and aspartate to form carbamoyl aspartate and inorganic phosphate, the committed step in the de novo pyrimidine nucleotide biosynthesis pathway. The chain is Aspartate carbamoyltransferase catalytic subunit from Methanococcus maripaludis (strain DSM 14266 / JCM 13030 / NBRC 101832 / S2 / LL).